Here is a 201-residue protein sequence, read N- to C-terminus: ATP-dependent Clp protease proteolytic subunit (201 aa).

The active-site Nucleophile is Ser98. His123 is a catalytic residue.

The protein belongs to the peptidase S14 family. Fourteen ClpP subunits assemble into 2 heptameric rings which stack back to back to give a disk-like structure with a central cavity, resembling the structure of eukaryotic proteasomes.

It localises to the cytoplasm. The enzyme catalyses Hydrolysis of proteins to small peptides in the presence of ATP and magnesium. alpha-casein is the usual test substrate. In the absence of ATP, only oligopeptides shorter than five residues are hydrolyzed (such as succinyl-Leu-Tyr-|-NHMec, and Leu-Tyr-Leu-|-Tyr-Trp, in which cleavage of the -Tyr-|-Leu- and -Tyr-|-Trp bonds also occurs).. Functionally, cleaves peptides in various proteins in a process that requires ATP hydrolysis. Has a chymotrypsin-like activity. Plays a major role in the degradation of misfolded proteins. This chain is ATP-dependent Clp protease proteolytic subunit, found in Neorickettsia sennetsu (strain ATCC VR-367 / Miyayama) (Ehrlichia sennetsu).